Here is a 332-residue protein sequence, read N- to C-terminus: Anthranilate phosphoribosyltransferase (332 aa).

Residues Gly-79, 82-83 (GD), Ser-87, 89-92 (NIST), 107-115 (KHGNRSVSS), and Ser-119 each bind 5-phospho-alpha-D-ribose 1-diphosphate. Gly-79 serves as a coordination point for anthranilate. Position 91 (Ser-91) interacts with Mg(2+). An anthranilate-binding site is contributed by Asn-110. Arg-165 is an anthranilate binding site. Residues Asp-223 and Glu-224 each coordinate Mg(2+).

This sequence belongs to the anthranilate phosphoribosyltransferase family. In terms of assembly, homodimer. Mg(2+) is required as a cofactor.

It carries out the reaction N-(5-phospho-beta-D-ribosyl)anthranilate + diphosphate = 5-phospho-alpha-D-ribose 1-diphosphate + anthranilate. It participates in amino-acid biosynthesis; L-tryptophan biosynthesis; L-tryptophan from chorismate: step 2/5. Its function is as follows. Catalyzes the transfer of the phosphoribosyl group of 5-phosphorylribose-1-pyrophosphate (PRPP) to anthranilate to yield N-(5'-phosphoribosyl)-anthranilate (PRA). This chain is Anthranilate phosphoribosyltransferase, found in Yersinia pseudotuberculosis serotype O:3 (strain YPIII).